Here is a 380-residue protein sequence, read N- to C-terminus: Erythronate-4-phosphate dehydrogenase (380 aa).

The substrate site is built by Ser-45 and Thr-66. Residues Asp-146 and Thr-174 each coordinate NAD(+). Arg-207 is an active-site residue. Asp-231 lines the NAD(+) pocket. The active site involves Glu-236. His-253 (proton donor) is an active-site residue. Gly-256 contacts NAD(+). Tyr-257 contributes to the substrate binding site.

Belongs to the D-isomer specific 2-hydroxyacid dehydrogenase family. PdxB subfamily. As to quaternary structure, homodimer.

The protein resides in the cytoplasm. The enzyme catalyses 4-phospho-D-erythronate + NAD(+) = (R)-3-hydroxy-2-oxo-4-phosphooxybutanoate + NADH + H(+). The protein operates within cofactor biosynthesis; pyridoxine 5'-phosphate biosynthesis; pyridoxine 5'-phosphate from D-erythrose 4-phosphate: step 2/5. In terms of biological role, catalyzes the oxidation of erythronate-4-phosphate to 3-hydroxy-2-oxo-4-phosphonooxybutanoate. The sequence is that of Erythronate-4-phosphate dehydrogenase from Pseudomonas fluorescens (strain ATCC BAA-477 / NRRL B-23932 / Pf-5).